The chain runs to 345 residues: Uroporphyrinogen decarboxylase (345 aa).

Residues 27 to 31 (RQAGR), Phe46, Asp76, Tyr152, Ser207, and His320 contribute to the substrate site.

The protein belongs to the uroporphyrinogen decarboxylase family. Homodimer.

The protein resides in the cytoplasm. The enzyme catalyses uroporphyrinogen III + 4 H(+) = coproporphyrinogen III + 4 CO2. It functions in the pathway porphyrin-containing compound metabolism; protoporphyrin-IX biosynthesis; coproporphyrinogen-III from 5-aminolevulinate: step 4/4. Its function is as follows. Catalyzes the decarboxylation of four acetate groups of uroporphyrinogen-III to yield coproporphyrinogen-III. In Geobacillus kaustophilus (strain HTA426), this protein is Uroporphyrinogen decarboxylase.